Reading from the N-terminus, the 525-residue chain is FNIP repeat-containing protein DDB_G0274617 (525 aa).

The stretch at 65–107 (YQHEIKKEMLPSSIISIIFYNIKNILSSDSIPDTVKFLGFNGY) is one FNIP repeat.

The protein is FNIP repeat-containing protein DDB_G0274617 of Dictyostelium discoideum (Social amoeba).